The sequence spans 370 residues: Probable neutral protease 2 homolog TRV_02539 (370 aa).

The signal sequence occupies residues 1–19 (MQLVAALAALGALVAPAVA). Positions 20-188 (YPHAPMNETL…SIHSRALQKR (169 aa)) are excised as a propeptide. Disulfide bonds link Cys196–Cys267 and Cys274–Cys292. His316 lines the Zn(2+) pocket. The active site involves Glu317. Residues His320 and Asp331 each contribute to the Zn(2+) site.

This sequence belongs to the peptidase M35 family. Zn(2+) is required as a cofactor.

The protein resides in the secreted. It catalyses the reaction Preferential cleavage of bonds with hydrophobic residues in P1'. Also 3-Asn-|-Gln-4 and 8-Gly-|-Ser-9 bonds in insulin B chain.. Probable secreted metalloprotease that shows high activities on basic nuclear substrates such as histone and protamine. May be involved in virulence. This is Probable neutral protease 2 homolog TRV_02539 from Trichophyton verrucosum (strain HKI 0517).